A 359-amino-acid chain; its full sequence is F-box protein At1g10895 (359 aa).

Positions 2–48 constitute an F-box domain; it reads TTMSDLDEIMVAEILCRTPMTCLKTVRSVCKKWNALSKKWFFFGKAK.

This chain is F-box protein At1g10895, found in Arabidopsis thaliana (Mouse-ear cress).